The primary structure comprises 607 residues: Autophagy-related protein 16-1 (607 aa).

The segment at tryptophan 13 to leucine 43 is interaction with ATG5. Positions asparagine 78–glutamate 230 form a coiled coil. Serine 139 carries the post-translational modification Phosphoserine; by CK2. The WIPI2-binding stretch occupies residues alanine 207–glutamate 230. Residues glutamate 230 to valine 242 are RB1CC1-binding. A phosphoserine mark is found at serine 269 and serine 287. Positions aspartate 296–aspartate 299 match the Caspase cleavage motif. WD repeat units lie at residues alanine 320 to lysine 359, glycine 364 to threonine 403, glycine 406 to threonine 445, phenylalanine 447 to glutamate 484, glutamate 486 to threonine 525, lysine 532 to serine 573, and glutamine 575 to tyrosine 607.

It belongs to the WD repeat ATG16 family. Homodimer. Homooligomer. Heterooligomer with ATG16L2. Interacts with WIPI1. Interacts with WIPI2. Interacts with RB1CC1; the interaction is required for ULK1 complex-dependent autophagy. Interacts with ATG5. Part of the minor complex composed of 4 sets of ATG12-ATG5 and ATG16L1 (400 kDa); this complex interacts with ATG3 leading to disruption of ATG7 interaction and promotion of ATG8-like proteins lipidation. Part of the major complex composed of 8 sets of ATG12-ATG5 and ATG16L1 (800 kDa). Interacts with RAB33B (GTP- and GDP-bound forms); the complex consists of a tetramer where two RAB33B molecules bind independently one molecule of the ATG16L1 homodimer; the interaction promotes ATG12-ATG5-ATG16L1 complex recruitment to phagophores. Interacts (via WD repeats) with TMEM59; the interaction mediates unconventional autophagic activity of TMEM59. Interacts with TLR2. Interacts (via WD repeats) with MEFV. Interacts with PPP1CA; the interaction dephosphorylates ATG16L1 causing dissociation of ATG12-ATG5-ATG16L1 complex. Interacts (via N-terminal) with CLTC. Interacts with NOD1. Interacts with NOD2. Interacts with TUFM. Interacts with TRIM16. Interacts (via WD repeats) with SPATA33. Interacts with IRGM. Proteolytic cleavage by activated CASP3 leads to degradation and may regulate autophagy upon cellular stress and apoptotic stimuli. In terms of processing, phosphorylation at Ser-139 promotes association with the ATG12-ATG5 conjugate to form the ATG12-ATG5-ATG16L1 complex.

It is found in the cytoplasm. The protein localises to the preautophagosomal structure membrane. It localises to the endosome membrane. The protein resides in the lysosome membrane. Its function is as follows. Plays an essential role in both canonical and non-canonical autophagy: interacts with ATG12-ATG5 to mediate the lipidation to ATG8 family proteins (MAP1LC3A, MAP1LC3B, MAP1LC3C, GABARAPL1, GABARAPL2 and GABARAP). Acts as a molecular hub, coordinating autophagy pathways via distinct domains that support either canonical or non-canonical signaling. During canonical autophagy, interacts with ATG12-ATG5 to mediate the conjugation of phosphatidylethanolamine (PE) to ATG8 proteins, to produce a membrane-bound activated form of ATG8. Thereby, controls the elongation of the nascent autophagosomal membrane. As part of the ATG8 conjugation system with ATG5 and ATG12, required for recruitment of LRRK2 to stressed lysosomes and induction of LRRK2 kinase activity in response to lysosomal stress. Also involved in non-canonical autophagy, a parallel pathway involving conjugation of ATG8 proteins to single membranes at endolysosomal compartments, probably by catalyzing conjugation of phosphatidylserine (PS) to ATG8. Non-canonical autophagy plays a key role in epithelial cells to limit lethal infection by influenza A (IAV) virus. Regulates mitochondrial antiviral signaling (MAVS)-dependent type I interferon (IFN-I) production. Negatively regulates NOD1- and NOD2-driven inflammatory cytokine response. Instead, promotes an autophagy-dependent antibacterial pathway together with NOD1 or NOD2. Plays a role in regulating morphology and function of Paneth cell. The protein is Autophagy-related protein 16-1 of Homo sapiens (Human).